The chain runs to 557 residues: CTP synthase (557 aa).

The interval 1–267 is amidoligase domain; sequence MAKYIFVTGG…GAYLTQRLGL (267 aa). Residue Ser13 coordinates CTP. Ser13 lines the UTP pocket. ATP is bound at residue 14–19; the sequence is SVGKGI. Tyr54 lines the L-glutamine pocket. ATP is bound at residue Asp71. Mg(2+) contacts are provided by Asp71 and Glu141. CTP is bound by residues 148 to 150, 188 to 193, and Lys224; these read DIE and KTKPTQ. Residues 188–193 and Lys224 contribute to the UTP site; that span reads KTKPTQ. Residues 292–535 enclose the Glutamine amidotransferase type-1 domain; it reads AIALVGKYVE…VAAAAKTFRE (244 aa). Gly354 is an L-glutamine binding site. The Nucleophile; for glutamine hydrolysis role is filled by Cys381. L-glutamine contacts are provided by residues 382 to 385, Glu406, and Arg463; that span reads LGMQ. Active-site residues include His508 and Glu510. Positions 536-557 are disordered; it reads GDQRPLPLEQNGAVTEHEPHSR.

The protein belongs to the CTP synthase family. As to quaternary structure, homotetramer.

The enzyme catalyses UTP + L-glutamine + ATP + H2O = CTP + L-glutamate + ADP + phosphate + 2 H(+). It carries out the reaction L-glutamine + H2O = L-glutamate + NH4(+). It catalyses the reaction UTP + NH4(+) + ATP = CTP + ADP + phosphate + 2 H(+). It functions in the pathway pyrimidine metabolism; CTP biosynthesis via de novo pathway; CTP from UDP: step 2/2. Its activity is regulated as follows. Allosterically activated by GTP, when glutamine is the substrate; GTP has no effect on the reaction when ammonia is the substrate. The allosteric effector GTP functions by stabilizing the protein conformation that binds the tetrahedral intermediate(s) formed during glutamine hydrolysis. Inhibited by the product CTP, via allosteric rather than competitive inhibition. In terms of biological role, catalyzes the ATP-dependent amination of UTP to CTP with either L-glutamine or ammonia as the source of nitrogen. Regulates intracellular CTP levels through interactions with the four ribonucleotide triphosphates. The protein is CTP synthase of Roseiflexus sp. (strain RS-1).